Here is a 180-residue protein sequence, read N- to C-terminus: Pyruvate synthase subunit PorC (180 aa).

In terms of assembly, heterotetramer of one alpha, one beta, one delta and one gamma chain.

The catalysed reaction is 2 oxidized [2Fe-2S]-[ferredoxin] + pyruvate + CoA = 2 reduced [2Fe-2S]-[ferredoxin] + acetyl-CoA + CO2 + H(+). This Methanothermobacter thermautotrophicus (strain ATCC 29096 / DSM 1053 / JCM 10044 / NBRC 100330 / Delta H) (Methanobacterium thermoautotrophicum) protein is Pyruvate synthase subunit PorC (porC).